The chain runs to 315 residues: Energy-coupling factor transporter ATP-binding protein EcfA2 (315 aa).

Positions 31-275 (IILDNVSYTY…QELLSKIQIE (245 aa)) constitute an ABC transporter domain. Residue 68–75 (GTTGSGKS) participates in ATP binding.

It belongs to the ABC transporter superfamily. Energy-coupling factor EcfA family. As to quaternary structure, forms a stable energy-coupling factor (ECF) transporter complex composed of 2 membrane-embedded substrate-binding proteins (S component), 2 ATP-binding proteins (A component) and 2 transmembrane proteins (T component).

The protein resides in the cell membrane. Functionally, ATP-binding (A) component of a common energy-coupling factor (ECF) ABC-transporter complex. Unlike classic ABC transporters this ECF transporter provides the energy necessary to transport a number of different substrates. The chain is Energy-coupling factor transporter ATP-binding protein EcfA2 from Mesoplasma florum (strain ATCC 33453 / NBRC 100688 / NCTC 11704 / L1) (Acholeplasma florum).